We begin with the raw amino-acid sequence, 70 residues long: Chondroitin proteoglycan 9 (70 aa).

Residues 1–19 (MNFWHLLLLAVLFFVTVFG) form the signal peptide. Residues Ser-25 and Ser-27 are each glycosylated (O-linked (Xyl...) (chondroitin sulfate) serine).

The chain is Chondroitin proteoglycan 9 (cpg-9) from Caenorhabditis briggsae.